The following is a 203-amino-acid chain: Ribosome maturation factor RimP (203 aa).

The disordered stretch occupies residues 184-203; the sequence is RRGSAPVEDEEGEGEAPTAH.

Belongs to the RimP family.

The protein localises to the cytoplasm. Its function is as follows. Required for maturation of 30S ribosomal subunits. The protein is Ribosome maturation factor RimP of Methylobacterium nodulans (strain LMG 21967 / CNCM I-2342 / ORS 2060).